We begin with the raw amino-acid sequence, 332 residues long: 2,3-diketo-L-gulonate reductase (332 aa).

His44 serves as the catalytic Proton donor. Residues 168–174, 224–225, and 304–306 each bind NAD(+); these read ITMVDMS, WK, and GHE.

Belongs to the LDH2/MDH2 oxidoreductase family. DlgD subfamily. Homodimer.

The protein resides in the cytoplasm. The enzyme catalyses 3-dehydro-L-gulonate + NAD(+) = 2,3-dioxo-L-gulonate + NADH + H(+). It catalyses the reaction 3-dehydro-L-gulonate + NADP(+) = 2,3-dioxo-L-gulonate + NADPH + H(+). In terms of biological role, catalyzes the reduction of 2,3-diketo-L-gulonate in the presence of NADH, to form 3-keto-L-gulonate. The sequence is that of 2,3-diketo-L-gulonate reductase from Salmonella paratyphi C (strain RKS4594).